Consider the following 194-residue polypeptide: dCTP deaminase (194 aa).

Residues Arg-110–Arg-115, Asp-128, Val-136–Glu-138, Tyr-171, Lys-178, and Gln-182 contribute to the dCTP site. Glu-138 functions as the Proton donor/acceptor in the catalytic mechanism. The segment at Arg-174–Lys-194 is disordered.

It belongs to the dCTP deaminase family. As to quaternary structure, homotrimer.

The catalysed reaction is dCTP + H2O + H(+) = dUTP + NH4(+). It participates in pyrimidine metabolism; dUMP biosynthesis; dUMP from dCTP (dUTP route): step 1/2. Functionally, catalyzes the deamination of dCTP to dUTP. This chain is dCTP deaminase, found in Shewanella frigidimarina (strain NCIMB 400).